A 213-amino-acid polypeptide reads, in one-letter code: Large ribosomal subunit protein uL3 (213 aa).

The disordered stretch occupies residues 131-155 (GRASHGNSVSHRAHGSTGNNQDPGR). Over residues 135 to 152 (HGNSVSHRAHGSTGNNQD) the composition is skewed to polar residues. Q151 carries the post-translational modification N5-methylglutamine.

The protein belongs to the universal ribosomal protein uL3 family. Part of the 50S ribosomal subunit. Forms a cluster with proteins L14 and L19. In terms of processing, methylated by PrmB.

Its function is as follows. One of the primary rRNA binding proteins, it binds directly near the 3'-end of the 23S rRNA, where it nucleates assembly of the 50S subunit. The protein is Large ribosomal subunit protein uL3 of Agrobacterium fabrum (strain C58 / ATCC 33970) (Agrobacterium tumefaciens (strain C58)).